A 186-amino-acid chain; its full sequence is Peptidyl-tRNA hydrolase (186 aa).

Position 14 (tyrosine 14) interacts with tRNA. Histidine 19 acts as the Proton acceptor in catalysis. TRNA contacts are provided by tyrosine 64, asparagine 66, and asparagine 113.

This sequence belongs to the PTH family. As to quaternary structure, monomer.

The protein localises to the cytoplasm. The enzyme catalyses an N-acyl-L-alpha-aminoacyl-tRNA + H2O = an N-acyl-L-amino acid + a tRNA + H(+). Hydrolyzes ribosome-free peptidyl-tRNAs (with 1 or more amino acids incorporated), which drop off the ribosome during protein synthesis, or as a result of ribosome stalling. In terms of biological role, catalyzes the release of premature peptidyl moieties from peptidyl-tRNA molecules trapped in stalled 50S ribosomal subunits, and thus maintains levels of free tRNAs and 50S ribosomes. The protein is Peptidyl-tRNA hydrolase of Agathobacter rectalis (strain ATCC 33656 / DSM 3377 / JCM 17463 / KCTC 5835 / VPI 0990) (Eubacterium rectale).